The following is a 77-amino-acid chain: Acyl carrier protein (77 aa).

One can recognise a Carrier domain in the interval 1-76 (MSIEERVKKI…SAIDYVAKAN (76 aa)). The residue at position 36 (serine 36) is an O-(pantetheine 4'-phosphoryl)serine.

Belongs to the acyl carrier protein (ACP) family. Post-translationally, 4'-phosphopantetheine is transferred from CoA to a specific serine of apo-ACP by AcpS. This modification is essential for activity because fatty acids are bound in thioester linkage to the sulfhydryl of the prosthetic group.

Its subcellular location is the cytoplasm. The protein operates within lipid metabolism; fatty acid biosynthesis. Carrier of the growing fatty acid chain in fatty acid biosynthesis. The polypeptide is Acyl carrier protein (Haemophilus ducreyi (strain 35000HP / ATCC 700724)).